The primary structure comprises 230 residues: Flagellar L-ring protein (230 aa).

An N-terminal signal peptide occupies residues 1 to 15 (MSRLPSLSRPCLAIA). A lipid anchor (N-palmitoyl cysteine) is attached at C16. C16 carries S-diacylglycerol cysteine lipidation.

It belongs to the FlgH family. As to quaternary structure, the basal body constitutes a major portion of the flagellar organelle and consists of four rings (L,P,S, and M) mounted on a central rod.

It is found in the cell outer membrane. It localises to the bacterial flagellum basal body. Assembles around the rod to form the L-ring and probably protects the motor/basal body from shearing forces during rotation. In Xanthomonas axonopodis pv. citri (strain 306), this protein is Flagellar L-ring protein.